The primary structure comprises 485 residues: Pyruvate kinase (485 aa).

Residue R33 coordinates substrate. K(+) contacts are provided by N35, S37, D67, and T68. An ATP-binding site is contributed by 35-38 (NFSH). ATP contacts are provided by R74 and K155. Residue E221 coordinates Mg(2+). Positions 244, 245, and 277 each coordinate substrate. D245 is a Mg(2+) binding site.

The protein belongs to the pyruvate kinase family. In terms of assembly, homotetramer. The cofactor is Mg(2+). K(+) is required as a cofactor.

It carries out the reaction pyruvate + ATP = phosphoenolpyruvate + ADP + H(+). The protein operates within carbohydrate degradation; glycolysis; pyruvate from D-glyceraldehyde 3-phosphate: step 5/5. The polypeptide is Pyruvate kinase (pyk) (Chlamydia trachomatis serovar D (strain ATCC VR-885 / DSM 19411 / UW-3/Cx)).